Consider the following 523-residue polypeptide: Jerky protein homolog-like (523 aa).

Residues 1–52 (MSGKRKRVVLTIKDKLDIIKKLEDGGSSKQLAVIYGIGETTVRDIRKNKEKI) enclose the HTH psq-type domain. 2 DNA-binding regions (H-T-H motif) span residues 28–48 (SKQL…IRKN) and 100–132 (PICA…FKQR). The HTH CENPB-type domain occupies 67 to 139 (KRKSMKPSMY…KQRHSIREIN (73 aa)). Residues 168-385 (LQPEQIYNAD…VKPVTISRAW (218 aa)) form the DDE-1 domain.

The protein belongs to the tigger transposable element derived protein family.

The protein resides in the nucleus. This Mus musculus (Mouse) protein is Jerky protein homolog-like (Jrkl).